A 282-amino-acid chain; its full sequence is Phycocyanobilin lyase subunit beta (282 aa).

Belongs to the CpcE/RpcE/PecE family. In terms of assembly, cpcE and CpcF associate to form a lyase.

Its function is as follows. Required for the chromophorylation of the CpcA gene product. This chain is Phycocyanobilin lyase subunit beta (cpcF1), found in Pseudanabaena tenuis (strain PCC 7409).